The following is a 293-amino-acid chain: MFLARNAGRAGYRGVVAYQQAASFSVSSAKAAGSRSSGGSDAGDYAREAAEHAKAGLKDLKNEASWKAKGVANQAAGAFERAKDTVKEGVHDMKRSGSRVFEQGQEEVEAGAQHAKAGYQSAKNAAQDTAATLKDKAGSAWNQAKHVVEDKGEDVVEAVKDTASKVWGKAKHVAEDVKENAQSPGGIADKASDVWSAAKDKAADVLSGAKHTAENLAHKAQAAIHDATASSGSQSQSQSQSQYRQGQQQGRQDQQQSKSQWGQTSPQSPDGFRPQAGQGPQGGKGPGQAGGRR.

Residues 1-31 constitute a mitochondrion transit peptide; that stretch reads MFLARNAGRAGYRGVVAYQQAASFSVSSAKA. The segment covering 27–43 has biased composition (low complexity); it reads SSAKAAGSRSSGGSDAG. Residues 27–52 are disordered; sequence SSAKAAGSRSSGGSDAGDYAREAAEH. LEA 11-mer repeat repeat units lie at residues 58 to 68, 83 to 93, 123 to 133, 134 to 144, 145 to 155, 160 to 170, 171 to 181, 199 to 209, and 210 to 220; these read KDLKNEASWKA, KDTVKEGVHDM, KNAAQDTAATL, KDKAGSAWNQA, KHVVEDKGEDV, KDTASKVWGKA, KHVAEDVKENA, KDKAADVLSGA, and KHTAENLAHKA. The disordered stretch occupies residues 217–293; sequence AHKAQAAIHD…KGPGQAGGRR (77 aa). A compositionally biased stretch (low complexity) spans 230-265; the sequence is SSGSQSQSQSQSQYRQGQQQGRQDQQQSKSQWGQTS. Positions 279–293 are enriched in gly residues; it reads GPQGGKGPGQAGGRR.

Belongs to the LEA type 4 family.

The protein resides in the mitochondrion. Mitochondrial heat soluble protein acting as a molecular shield in water-deficient condition. This Ramazzottius varieornatus (Water bear) protein is Group 3 late-embryogenesis abundant protein, mitochondrial.